A 156-amino-acid chain; its full sequence is Protein-export protein SecB (156 aa).

It belongs to the SecB family. As to quaternary structure, homotetramer, a dimer of dimers. One homotetramer interacts with 1 SecA dimer.

The protein resides in the cytoplasm. One of the proteins required for the normal export of preproteins out of the cell cytoplasm. It is a molecular chaperone that binds to a subset of precursor proteins, maintaining them in a translocation-competent state. It also specifically binds to its receptor SecA. This Serratia proteamaculans (strain 568) protein is Protein-export protein SecB.